A 271-amino-acid chain; its full sequence is Formamidopyrimidine-DNA glycosylase (271 aa).

Pro-2 acts as the Schiff-base intermediate with DNA in catalysis. The Proton donor role is filled by Glu-3. Residue Lys-57 is the Proton donor; for beta-elimination activity of the active site. DNA-binding residues include His-90, Arg-109, and Lys-151. Residues 236–270 (HVYGRGGDTCTHCGQLLSEIRLGQRATVFCSICQQ) form an FPG-type zinc finger. The Proton donor; for delta-elimination activity role is filled by Arg-260.

It belongs to the FPG family. Monomer. The cofactor is Zn(2+).

The enzyme catalyses Hydrolysis of DNA containing ring-opened 7-methylguanine residues, releasing 2,6-diamino-4-hydroxy-5-(N-methyl)formamidopyrimidine.. It catalyses the reaction 2'-deoxyribonucleotide-(2'-deoxyribose 5'-phosphate)-2'-deoxyribonucleotide-DNA = a 3'-end 2'-deoxyribonucleotide-(2,3-dehydro-2,3-deoxyribose 5'-phosphate)-DNA + a 5'-end 5'-phospho-2'-deoxyribonucleoside-DNA + H(+). Involved in base excision repair of DNA damaged by oxidation or by mutagenic agents. Acts as a DNA glycosylase that recognizes and removes damaged bases. Has a preference for oxidized purines, such as 7,8-dihydro-8-oxoguanine (8-oxoG). Has AP (apurinic/apyrimidinic) lyase activity and introduces nicks in the DNA strand. Cleaves the DNA backbone by beta-delta elimination to generate a single-strand break at the site of the removed base with both 3'- and 5'-phosphates. In Shewanella piezotolerans (strain WP3 / JCM 13877), this protein is Formamidopyrimidine-DNA glycosylase.